A 30-amino-acid chain; its full sequence is ECWSQAADCSDGHCCAGRSFSKNCRPYGGD.

Disulfide bonds link C2-C15 and C9-C24.

Belongs to the AVIT (prokineticin) family. Expressed by the venom gland.

It localises to the secreted. This Cyriopagopus hainanus (Chinese bird spider) protein is Hainantoxin F6-34.84.